Here is a 359-residue protein sequence, read N- to C-terminus: Leafy/floricaula homolog FL1 (359 aa).

The tract at residues 113 to 170 is disordered; sequence SEEQVVQHSEKDQLGRAGSGDTAGTSWGAQQQRKKHRHRHHITAMKGAATEEDEEDEE. Basic residues predominate over residues 144-155; the sequence is QRKKHRHRHHIT. 3 consecutive DNA-binding regions follow at residues 179–183, 248–255, and 320–323; these read REHPF, NKPKMRHY, and YVPT. A compositionally biased stretch (low complexity) spans 340–352; it reads ASSASTSTSAPTA. Positions 340–359 are disordered; it reads ASSASTSTSAPTAHHLELPY.

The protein belongs to the FLO/LFY family. In terms of tissue distribution, expressed strongly in the early floral primordium and then successively in the primordia of sepals, petals, stamens and carpels. Also in the leaf primordia and young leaves.

It localises to the nucleus. In terms of biological role, probable transcription factor. The polypeptide is Leafy/floricaula homolog FL1 (LF1) (Eucalyptus globulus (Tasmanian blue gum)).